We begin with the raw amino-acid sequence, 512 residues long: Maturase K (512 aa).

The protein belongs to the intron maturase 2 family. MatK subfamily.

Its subcellular location is the plastid. The protein localises to the chloroplast. In terms of biological role, usually encoded in the trnK tRNA gene intron. Probably assists in splicing its own and other chloroplast group II introns. This chain is Maturase K, found in Acer platanoides (Norway maple).